The primary structure comprises 120 residues: Large ribosomal subunit protein uL18 (120 aa).

The protein belongs to the universal ribosomal protein uL18 family. As to quaternary structure, part of the 50S ribosomal subunit; part of the 5S rRNA/L5/L18/L25 subcomplex. Contacts the 5S and 23S rRNAs.

This is one of the proteins that bind and probably mediate the attachment of the 5S RNA into the large ribosomal subunit, where it forms part of the central protuberance. This chain is Large ribosomal subunit protein uL18, found in Allorhizobium ampelinum (strain ATCC BAA-846 / DSM 112012 / S4) (Agrobacterium vitis (strain S4)).